A 706-amino-acid polypeptide reads, in one-letter code: Methionine--tRNA ligase (706 aa).

The short motif at 13–23 is the 'HIGH' region element; that stretch reads PYANGNFHIGH. Residues Cys-144, Cys-147, Cys-157, and Cys-160 each coordinate Zn(2+). Residues 341-345 carry the 'KMSKS' region motif; it reads KMSKS. Lys-344 contributes to the ATP binding site. The region spanning 600–706 is the tRNA-binding domain; the sequence is DFAKIDLRIA…PGATPGMRVR (107 aa).

The protein belongs to the class-I aminoacyl-tRNA synthetase family. MetG type 1 subfamily. In terms of assembly, homodimer. Zn(2+) is required as a cofactor.

The protein resides in the cytoplasm. It catalyses the reaction tRNA(Met) + L-methionine + ATP = L-methionyl-tRNA(Met) + AMP + diphosphate. Functionally, is required not only for elongation of protein synthesis but also for the initiation of all mRNA translation through initiator tRNA(fMet) aminoacylation. The chain is Methionine--tRNA ligase from Paracidovorax citrulli (strain AAC00-1) (Acidovorax citrulli).